The following is a 165-amino-acid chain: Ribosome maturation factor RimM (165 aa).

Residues 94–165 form the PRC barrel domain; it reads EDEFYIADLT…YVILNYQREA (72 aa).

It belongs to the RimM family. As to quaternary structure, binds ribosomal protein uS19.

The protein resides in the cytoplasm. An accessory protein needed during the final step in the assembly of 30S ribosomal subunit, possibly for assembly of the head region. Essential for efficient processing of 16S rRNA. May be needed both before and after RbfA during the maturation of 16S rRNA. It has affinity for free ribosomal 30S subunits but not for 70S ribosomes. The chain is Ribosome maturation factor RimM from Rickettsia conorii (strain ATCC VR-613 / Malish 7).